A 104-amino-acid polypeptide reads, in one-letter code: L-rhamnose mutarotase (104 aa).

Y18 contacts substrate. H22 functions as the Proton donor in the catalytic mechanism. Residues Y41 and 76-77 contribute to the substrate site; that span reads WW.

It belongs to the rhamnose mutarotase family. In terms of assembly, homodimer.

It is found in the cytoplasm. It catalyses the reaction alpha-L-rhamnose = beta-L-rhamnose. Its pathway is carbohydrate metabolism; L-rhamnose metabolism. Functionally, involved in the anomeric conversion of L-rhamnose. In Salmonella heidelberg (strain SL476), this protein is L-rhamnose mutarotase.